Consider the following 261-residue polypeptide: GTP cyclohydrolase FolE2 (261 aa).

It belongs to the GTP cyclohydrolase IV family.

It catalyses the reaction GTP + H2O = 7,8-dihydroneopterin 3'-triphosphate + formate + H(+). It functions in the pathway cofactor biosynthesis; 7,8-dihydroneopterin triphosphate biosynthesis; 7,8-dihydroneopterin triphosphate from GTP: step 1/1. Functionally, converts GTP to 7,8-dihydroneopterin triphosphate. The protein is GTP cyclohydrolase FolE2 of Herminiimonas arsenicoxydans.